The primary structure comprises 367 residues: 5-amino-6-(D-ribitylamino)uracil--L-tyrosine 4-hydroxyphenyl transferase (367 aa).

The Radical SAM core domain occupies 54–288 (ITYIENWNIN…VYAISRLMFR (235 aa)). Residues C68, C72, and C75 each contribute to the [4Fe-4S] cluster site.

Belongs to the radical SAM superfamily. CofH family. Consists of two subunits, CofG and CofH. Requires [4Fe-4S] cluster as cofactor.

The catalysed reaction is 5-amino-6-(D-ribitylamino)uracil + L-tyrosine + S-adenosyl-L-methionine = 5-amino-5-(4-hydroxybenzyl)-6-(D-ribitylimino)-5,6-dihydrouracil + 2-iminoacetate + 5'-deoxyadenosine + L-methionine + H(+). The protein operates within cofactor biosynthesis; coenzyme F0 biosynthesis. Its function is as follows. Catalyzes the radical-mediated synthesis of 5-amino-5-(4-hydroxybenzyl)-6-(D-ribitylimino)-5,6-dihydrouracil from 5-amino-6-(D-ribitylamino)uracil and L-tyrosine. The chain is 5-amino-6-(D-ribitylamino)uracil--L-tyrosine 4-hydroxyphenyl transferase from Methanothermobacter thermautotrophicus (strain ATCC 29096 / DSM 1053 / JCM 10044 / NBRC 100330 / Delta H) (Methanobacterium thermoautotrophicum).